Consider the following 1595-residue polypeptide: Pentafunctional AROM polypeptide (1595 aa).

The interval 1-384 is 3-dehydroquinate synthase; sequence MGVPTKISIL…HEPRASTVSN (384 aa). NAD(+)-binding positions include 44–46, 81–84, 114–116, and D119; these read DTN, ESSK, and GGV. Residue R130 coordinates 7-phospho-2-dehydro-3-deoxy-D-arabino-heptonate. Position 139–140 (139–140) interacts with NAD(+); that stretch reads TT. D146 and K152 together coordinate 7-phospho-2-dehydro-3-deoxy-D-arabino-heptonate. An NAD(+)-binding site is contributed by K161. 7-phospho-2-dehydro-3-deoxy-D-arabino-heptonate is bound at residue N162. NAD(+)-binding positions include 179–182 and N190; that span reads FLNT. E194 is a Zn(2+) binding site. 7-phospho-2-dehydro-3-deoxy-D-arabino-heptonate contacts are provided by residues 194-197 and K250; that span reads EVIK. The active-site Proton acceptor; for 3-dehydroquinate synthase activity is the E260. 7-phospho-2-dehydro-3-deoxy-D-arabino-heptonate-binding positions include 264–268 and H271; that span reads RNLLN. A Zn(2+)-binding site is contributed by H271. The Proton acceptor; for 3-dehydroquinate synthase activity role is filled by H275. The 7-phospho-2-dehydro-3-deoxy-D-arabino-heptonate site is built by H287 and K356. Residue H287 coordinates Zn(2+). The segment at 397–842 is EPSP synthase; the sequence is VSPGVPKGLD…WDSLAQTFKV (446 aa). Residue C824 is the For EPSP synthase activity of the active site. The segment at 866–1057 is shikimate kinase; it reads ASIFIIGMRG…RRKENTFFVS (192 aa). 872–879 provides a ligand contact to ATP; it reads GMRGAGKT. Residues 1058–1278 are 3-dehydroquinase; it reads LTLPDLGLAA…AAPGQLSARE (221 aa). The Proton acceptor; for 3-dehydroquinate dehydratase activity role is filled by H1181. Residue K1209 is the Schiff-base intermediate with substrate; for 3-dehydroquinate dehydratase activity of the active site. The tract at residues 1291–1595 is shikimate dehydrogenase; sequence AKKFAVIGNP…MGVLPSEDIS (305 aa).

In the N-terminal section; belongs to the sugar phosphate cyclases superfamily. Dehydroquinate synthase family. This sequence in the 2nd section; belongs to the EPSP synthase family. It in the 3rd section; belongs to the shikimate kinase family. The protein in the 4th section; belongs to the type-I 3-dehydroquinase family. In the C-terminal section; belongs to the shikimate dehydrogenase family. Homodimer. It depends on Zn(2+) as a cofactor.

It localises to the cytoplasm. It carries out the reaction 7-phospho-2-dehydro-3-deoxy-D-arabino-heptonate = 3-dehydroquinate + phosphate. The catalysed reaction is 3-dehydroquinate = 3-dehydroshikimate + H2O. It catalyses the reaction shikimate + NADP(+) = 3-dehydroshikimate + NADPH + H(+). The enzyme catalyses shikimate + ATP = 3-phosphoshikimate + ADP + H(+). It carries out the reaction 3-phosphoshikimate + phosphoenolpyruvate = 5-O-(1-carboxyvinyl)-3-phosphoshikimate + phosphate. Its pathway is metabolic intermediate biosynthesis; chorismate biosynthesis; chorismate from D-erythrose 4-phosphate and phosphoenolpyruvate: step 2/7. It functions in the pathway metabolic intermediate biosynthesis; chorismate biosynthesis; chorismate from D-erythrose 4-phosphate and phosphoenolpyruvate: step 3/7. It participates in metabolic intermediate biosynthesis; chorismate biosynthesis; chorismate from D-erythrose 4-phosphate and phosphoenolpyruvate: step 4/7. The protein operates within metabolic intermediate biosynthesis; chorismate biosynthesis; chorismate from D-erythrose 4-phosphate and phosphoenolpyruvate: step 5/7. Its pathway is metabolic intermediate biosynthesis; chorismate biosynthesis; chorismate from D-erythrose 4-phosphate and phosphoenolpyruvate: step 6/7. Its function is as follows. The AROM polypeptide catalyzes 5 consecutive enzymatic reactions in prechorismate polyaromatic amino acid biosynthesis. In Ajellomyces capsulatus (strain H143) (Darling's disease fungus), this protein is Pentafunctional AROM polypeptide.